Consider the following 50-residue polypeptide: Defensin-like protein 1 (50 aa).

4 disulfides stabilise this stretch: cysteine 3–cysteine 50, cysteine 14–cysteine 35, cysteine 20–cysteine 44, and cysteine 24–cysteine 46.

Belongs to the DEFL family.

It is found in the secreted. Its function is as follows. Possesses antimicrobial activity sensitive to inorganic cations. Has no inhibitory effect on insect gut alpha-amylase. Induces potential changes in fungal membranes and increased K+ efflux and Ca(2+) uptake. Interacts with sphingolipids and ergosterols found in fungal plasma membranes. The protein is Defensin-like protein 1 of Dahlia merckii (Bedding dahlia).